The sequence spans 442 residues: Testican-1 (442 aa).

The first 21 residues, 1–21 (MPAIAVLAAAAAAWCFLQVDS), serve as a signal peptide directing secretion. 8 disulfide bridges follow: Cys89-Cys100, Cys94-Cys110, Cys139-Cys169, Cys142-Cys162, Cys151-Cys183, Cys316-Cys340, Cys351-Cys358, and Cys360-Cys379. A Kazal-like domain is found at 133 to 185 (PSNLVKCKPCPVAQSAMVCGSDGHTYTSKCKLEFHACSTGKSLNSLCDGPCPC). The Thyroglobulin type-1 domain maps to 313 to 379 (GLPCQNEMNR…GSRKQGTVSC (67 aa)). 2 disordered regions span residues 375 to 395 (GTVS…GGSV) and 420 to 442 (TRAV…GYIW). O-linked (Xyl...) (glycosaminoglycan) serine glycans are attached at residues Ser386 and Ser391. Residues 425 to 442 (EDDEDEDDDKEDEVGYIW) are compositionally biased toward acidic residues.

In terms of processing, contains chondroitin sulfate and heparan sulfate O-linked oligosaccharides. As to expression, predominantly expressed in the postsynaptic area of pyramidal neurons.

Its subcellular location is the secreted. The protein localises to the extracellular space. It is found in the extracellular matrix. May play a role in cell-cell and cell-matrix interactions. May contribute to various neuronal mechanisms in the central nervous system. This is Testican-1 (Spock1) from Mus musculus (Mouse).